The sequence spans 517 residues: Apolipoprotein N-acyltransferase (517 aa).

7 consecutive transmembrane segments (helical) span residues 5 to 25, 26 to 46, 55 to 75, 90 to 110, 128 to 148, 162 to 182, and 193 to 213; these read SFFS…ATLT, FAPY…LWLL, GLIG…WVHV, FLMS…GALF, VIWL…PWLW, APIL…GALV, and LMVP…SWVV. One can recognise a CN hydrolase domain in the interval 225 to 471; sequence IQGNVPQELK…TAVLRATITP (247 aa). The active-site Proton acceptor is Glu264. Lys330 is an active-site residue. The active-site Nucleophile is the Cys382.

The protein belongs to the CN hydrolase family. Apolipoprotein N-acyltransferase subfamily.

Its subcellular location is the cell inner membrane. It catalyses the reaction N-terminal S-1,2-diacyl-sn-glyceryl-L-cysteinyl-[lipoprotein] + a glycerophospholipid = N-acyl-S-1,2-diacyl-sn-glyceryl-L-cysteinyl-[lipoprotein] + a 2-acyl-sn-glycero-3-phospholipid + H(+). The protein operates within protein modification; lipoprotein biosynthesis (N-acyl transfer). Its function is as follows. Catalyzes the phospholipid dependent N-acylation of the N-terminal cysteine of apolipoprotein, the last step in lipoprotein maturation. The polypeptide is Apolipoprotein N-acyltransferase (Photobacterium profundum (strain SS9)).